The primary structure comprises 185 residues: Ribosome-recycling factor (185 aa).

Belongs to the RRF family.

The protein resides in the cytoplasm. Its function is as follows. Responsible for the release of ribosomes from messenger RNA at the termination of protein biosynthesis. May increase the efficiency of translation by recycling ribosomes from one round of translation to another. In Frankia alni (strain DSM 45986 / CECT 9034 / ACN14a), this protein is Ribosome-recycling factor.